Reading from the N-terminus, the 190-residue chain is Small ribosomal subunit protein eS7x (190 aa).

An N-acetylmethionine modification is found at Met-1. The stretch at 17–50 forms a coiled coil; it reads TECEEQVAQALFDLENTNQELKSELKDLYINQAV.

The protein belongs to the eukaryotic ribosomal protein eS7 family.

This is Small ribosomal subunit protein eS7x (RPS7C) from Arabidopsis thaliana (Mouse-ear cress).